Here is a 145-residue protein sequence, read N- to C-terminus: Transcriptional regulator MraZ (145 aa).

SpoVT-AbrB domains are found at residues 7-54 and 83-126; these read NATN…GPDL and GVFM…QPQA.

Belongs to the MraZ family. In terms of assembly, forms oligomers.

The protein resides in the cytoplasm. It localises to the nucleoid. In Rhizobium leguminosarum bv. trifolii (strain WSM2304), this protein is Transcriptional regulator MraZ.